The sequence spans 137 residues: Ribosome-binding factor A (137 aa).

Belongs to the RbfA family. Monomer. Binds 30S ribosomal subunits, but not 50S ribosomal subunits or 70S ribosomes.

Its subcellular location is the cytoplasm. Functionally, one of several proteins that assist in the late maturation steps of the functional core of the 30S ribosomal subunit. Associates with free 30S ribosomal subunits (but not with 30S subunits that are part of 70S ribosomes or polysomes). Required for efficient processing of 16S rRNA. May interact with the 5'-terminal helix region of 16S rRNA. The polypeptide is Ribosome-binding factor A (Cereibacter sphaeroides (strain KD131 / KCTC 12085) (Rhodobacter sphaeroides)).